The sequence spans 512 residues: Glutathione-binding protein GsiB (512 aa).

An N-terminal signal peptide occupies residues 1–26 (MTQFITHKWLAALGLASSIAAFPALA).

The protein belongs to the bacterial solute-binding protein 5 family. The complex is composed of two ATP-binding proteins (GsiA), two transmembrane proteins (GsiC and GsiD) and a solute-binding protein (GsiB).

The protein resides in the periplasm. Its function is as follows. Part of the ABC transporter complex GsiABCD involved in glutathione import. Binds glutathione. The sequence is that of Glutathione-binding protein GsiB from Salmonella choleraesuis (strain SC-B67).